We begin with the raw amino-acid sequence, 80 residues long: uncharacterized protein (80 aa).

This is an uncharacterized protein from Haemophilus influenzae (strain ATCC 51907 / DSM 11121 / KW20 / Rd).